A 267-amino-acid chain; its full sequence is Hydrolase FUB4 (267 aa).

Residues Ser93, Asp183, and His243 each act as charge relay system in the active site.

This sequence belongs to the AB hydrolase 3 family.

It functions in the pathway mycotoxin biosynthesis. Functionally, hydrolase; part of the gene cluster that mediates the biosynthesis of fusaric acid, a mycotoxin with low to moderate toxicity to animals and humans, but with high phytotoxic properties. L-aspartate is suggested as fusaric acid amino acid precursor that is activated and further processed to O-acetyl-L-homoserine by cluster enzymes aspartate kinase FUB3 and homoserine O-acetyltransferase FUB5, as well as enzymes of the primary metabolism. The polyketide synthase (PKS) FUB1 generates the triketide trans-2-hexenal which is presumptively released by the hydrolase FUB4 and linked to the NRPS-bound amino acid precursor by NAD(P)-dependent dehydrogenase FUB6. FUB1, FUB4, and the non-canonical NRPS Fub8 may form an enzyme complex. Further processing of the NRPS-bound intermediate might be carried out by FUB6 and the sulfhydrylase FUB7, enabling a spontaneous electrocyclization to close the carbon backbone of fusaric acid. Dihydrofusaric acid is likely to be released via reduction by the thioester reductase (TR) domain of FUB8 whereupon the final oxidation to fusaric acid may (also) be performed by the FMN-dependent dehydrogenase FUB9. This chain is Hydrolase FUB4, found in Fusarium oxysporum f. sp. lycopersici (strain 4287 / CBS 123668 / FGSC 9935 / NRRL 34936) (Fusarium vascular wilt of tomato).